Here is a 422-residue protein sequence, read N- to C-terminus: Isocitrate dehydrogenase [NADP] (422 aa).

Thr-94 contacts NADP(+). Positions 103, 105, 109, 119, and 143 each coordinate D-threo-isocitrate. Asp-310 serves as a coordination point for Mg(2+). Residues 344-350 (HGTAPKY), Asn-357, Tyr-396, and Arg-400 each bind NADP(+).

Belongs to the isocitrate and isopropylmalate dehydrogenases family. Homodimer. The cofactor is Mg(2+). Requires Mn(2+) as cofactor.

It catalyses the reaction D-threo-isocitrate + NADP(+) = 2-oxoglutarate + CO2 + NADPH. Its function is as follows. Catalyzes the oxidative decarboxylation of isocitrate to 2-oxoglutarate and carbon dioxide with the concomitant reduction of NADP(+). This is Isocitrate dehydrogenase [NADP] (icd) from Staphylococcus aureus (strain MSSA476).